A 367-amino-acid chain; its full sequence is MISVVVVDDSAFMRKALSTMLEKDPEIRVVATARDGEEGLQVIRQHNPDVVTLDIEMPRMDGLTTLRHIMMEMPRPVLMVSSLTTEGAEATLKALELGAVDFIPKQLSKVSLDIVRIENDLREKVKEVSKRRMLRTPRPVRPAPTASAPAQTAQVASAAPATAPSRPAMPATRASRPVRDVVAIGVSTGGPPAVQKVLSQLPADFPASILIAQHMPAAFTGPFAKRLDGVCAISVKEAESGEKLKPGTAYIAPGGKHLRVEQRVSHMEVVVTTDPADALYKPSANVLMESVGQSMGRRALGVILTGMGSDGMEGMKVLKQKGGRSIAQSDATCVVYGMPKAIVDAGLADEIVDIDDMAAAIMNGLYK.

Residues 3–120 (SVVVVDDSAF…SLDIVRIEND (118 aa)) enclose the Response regulatory domain. Aspartate 54 is subject to 4-aspartylphosphate. Residues 132–174 (RMLRTPRPVRPAPTASAPAQTAQVASAAPATAPSRPAMPATRA) form a disordered region. Residues 143-174 (APTASAPAQTAQVASAAPATAPSRPAMPATRA) are compositionally biased toward low complexity. Residues 175 to 367 (SRPVRDVVAI…AAAIMNGLYK (193 aa)) enclose the CheB-type methylesterase domain. Active-site residues include serine 187, histidine 214, and aspartate 310.

The protein belongs to the CheB family. Post-translationally, phosphorylated by CheA. Phosphorylation of the N-terminal regulatory domain activates the methylesterase activity.

Its subcellular location is the cytoplasm. It catalyses the reaction [protein]-L-glutamate 5-O-methyl ester + H2O = L-glutamyl-[protein] + methanol + H(+). The enzyme catalyses L-glutaminyl-[protein] + H2O = L-glutamyl-[protein] + NH4(+). Its function is as follows. Involved in chemotaxis. Part of a chemotaxis signal transduction system that modulates chemotaxis in response to various stimuli. Catalyzes the demethylation of specific methylglutamate residues introduced into the chemoreceptors (methyl-accepting chemotaxis proteins or MCP) by CheR. Also mediates the irreversible deamidation of specific glutamine residues to glutamic acid. This is Protein-glutamate methylesterase/protein-glutamine glutaminase 2 from Nitratidesulfovibrio vulgaris (strain ATCC 29579 / DSM 644 / CCUG 34227 / NCIMB 8303 / VKM B-1760 / Hildenborough) (Desulfovibrio vulgaris).